A 677-amino-acid polypeptide reads, in one-letter code: Regulator of G-protein signaling 9 (677 aa).

In terms of domain architecture, DEP spans 30 to 105 (PETGVRMQNQ…PDSSLYRFQT (76 aa)). Residues 219–280 (VTAVRKEIMY…ITDDTQFWDL (62 aa)) enclose the G protein gamma domain. In terms of domain architecture, RGS spans 295-416 (RWAFNFSELI…SPIYKEMLAK (122 aa)). Disordered stretches follow at residues 530 to 571 (SSGL…RAPL) and 639 to 677 (DSGPCLMDSDDPGAGESGDQTTEKEVICPWESLAEGKAG).

As to quaternary structure, heterodimer with GNB5. Interacts with RGS7BP, leading to regulate the subcellular location of the heterodimer formed with GNB5. Component of the RGS9-1-Gbeta5 complex composed of RGS9 (RGS9-1), Gbeta5 (GNB5) and RGS9BP. Interacts with PDE6G and GNAT1. Expressed in the central nervous system. Isoform RGS9L is found in striatum, hypothalamus and nucleus accumbens while isoform RGS9S is expressed in retina and pineal gland.

It is found in the membrane. Its function is as follows. Inhibits signal transduction by increasing the GTPase activity of G protein alpha subunits thereby driving them into their inactive GDP-bound form. Binds to GNAT1. Involved in phototransduction; key element in the recovery phase of visual transduction. The sequence is that of Regulator of G-protein signaling 9 (Rgs9) from Rattus norvegicus (Rat).